The following is a 261-amino-acid chain: uncharacterized protein (261 aa).

The protein belongs to the FrhB family.

This is an uncharacterized protein from Methanocaldococcus jannaschii (strain ATCC 43067 / DSM 2661 / JAL-1 / JCM 10045 / NBRC 100440) (Methanococcus jannaschii).